A 203-amino-acid polypeptide reads, in one-letter code: AFG2-interacting ribosome maturation factor (203 aa).

Part of the 55LCC heterohexameric ATPase complex composed at least of AIRIM, AFG2A, AFG2B and CINP. Does not associate with pre-60S ribosomal particles. Phosphorylated on serines by CK2 kinase.

The protein resides in the nucleus. Its subcellular location is the cytoplasm. Its function is as follows. Part of the 55LCC heterohexameric ATPase complex which is chromatin-associated and promotes replisome proteostasis to maintain replication fork progression and genome stability. Required for replication fork progression, sister chromatid cohesion, and chromosome stability. The ATPase activity is specifically enhanced by replication fork DNA and is coupled to cysteine protease-dependent cleavage of replisome substrates in response to replication fork damage. Uses ATPase activity to process replisome substrates in S-phase, facilitating their proteolytic turnover from chromatin to ensure DNA replication and mitotic fidelity. Involved in the cytoplasmic maturation steps of pre-60S ribosomal particles by promoting the release of shuttling protein RSL24D1/RLP24 from the pre-ribosomal particles. This chain is AFG2-interacting ribosome maturation factor, found in Homo sapiens (Human).